The primary structure comprises 434 residues: Protein arginine N-methyltransferase 2 (434 aa).

The interval Ile-155–Glu-198 is disordered. Positions Asp-178–Pro-193 are enriched in basic and acidic residues. The region spanning Pro-193 to Val-434 is the RMT2 domain. Residues Tyr-200, Met-230, Phe-258–Ile-263, Glu-279–His-281, Trp-306–Gln-307, and Asp-327 contribute to the S-adenosyl-L-methionine site.

It belongs to the class I-like SAM-binding methyltransferase superfamily. RMT2 methyltransferase family. Monomer.

It is found in the cytoplasm. It localises to the nucleus. S-adenosyl-L-methionine-dependent protein-arginine N-methyltransferase that methylates the delta-nitrogen atom of arginine residues to form N5-methylarginine (type IV) in target proteins. Monomethylates ribosomal protein L12. This chain is Protein arginine N-methyltransferase 2, found in Debaryomyces hansenii (strain ATCC 36239 / CBS 767 / BCRC 21394 / JCM 1990 / NBRC 0083 / IGC 2968) (Yeast).